The following is a 376-amino-acid chain: Galactoside alpha-(1,2)-fucosyltransferase 1 (376 aa).

At 1 to 12 the chain is on the cytoplasmic side; the sequence is MWTPSRKQLCLA. Residues 13–29 form a helical; Signal-anchor for type II membrane protein membrane-spanning segment; that stretch reads FLSVCVLSAGSFFFHLN. Residues 30-376 lie on the Lumenal side of the membrane; it reads GGNFFQNALT…WETDSLFRLA (347 aa). N-linked (GlcNAc...) asparagine glycans are attached at residues asparagine 64, asparagine 302, and asparagine 328.

Belongs to the glycosyltransferase 11 family.

The protein localises to the golgi apparatus. Its subcellular location is the golgi stack membrane. The enzyme catalyses a beta-D-galactosyl-(1-&gt;4)-N-acetyl-beta-D-glucosaminyl derivative + GDP-beta-L-fucose = an alpha-L-Fuc-(1-&gt;2)-beta-D-Gal-(1-&gt;4)-beta-D-GlcNAc derivative + GDP + H(+). It carries out the reaction a ganglioside GA1 + GDP-beta-L-fucose = a ganglioside Fuc-GA1 + GDP + H(+). The catalysed reaction is a beta-D-Gal-(1-&gt;3)-beta-D-GlcNAc-(1-&gt;3)-beta-D-Gal-(1-&gt;4)-beta-D-Glc-(1&lt;-&gt;1')-Cer(d18:1(4E)) + GDP-beta-L-fucose = alpha-L-fucosyl-(1-&gt;2)- beta-D-galactosyl-(1-&gt;3)-N-acetyl-beta-D-glucosaminyl-(1-&gt;3)-beta-D-galactosyl-(1-&gt;4)-beta-D-glucosyl-(1&lt;-&gt;1')-N-acylsphing-4-enine + GDP + H(+). It catalyses the reaction a neolactoside nLc4Cer(d18:1(4E)) + GDP-beta-L-fucose = a neolactoside IV(2)-alpha-Fuc-nLc4Cer(d18:1(4E)) + GDP + H(+). The enzyme catalyses a ganglioside GM1 + GDP-beta-L-fucose = a ganglioside Fuc-GM1 + GDP + H(+). It carries out the reaction beta-D-galactosyl-(1-&gt;3)-N-acetyl-D-galactosamine + GDP-beta-L-fucose = alpha-L-fucosyl-(1-&gt;2)-beta-D-galactosyl-(1-&gt;3)-N-acetyl-D-galactosamine + GDP + H(+). It functions in the pathway protein modification; protein glycosylation. Functionally, catalyzes the transfer of L-fucose, from a guanosine diphosphate-beta-L-fucose, to the terminal galactose residue of glycoconjugates through an alpha(1,2) linkage leading to H antigen synthesis that is an intermediate substrate in the synthesis of ABO blood group antigens. H antigen is essential for maturation of the glomerular layer of the main olfactory bulb, in cell migration and early cell-cell contacts during tumor associated angiogenesis. Preferentially fucosylates soluble lactose and to a lesser extent fucosylates glycolipids gangliosides GA1 and GM1a. The polypeptide is Galactoside alpha-(1,2)-fucosyltransferase 1 (Rattus norvegicus (Rat)).